We begin with the raw amino-acid sequence, 1208 residues long: E3 ubiquitin-protein ligase DZIP3 (1208 aa).

Over residues 10 to 29 (VRHPAVEDQRKEETENKLEK) the composition is skewed to basic and acidic residues. Disordered regions lie at residues 10 to 38 (VRHPAVEDQRKEETENKLEKSSGQLNKQE) and 637 to 698 (GTSI…PHSV). 4 coiled-coil regions span residues 14–43 (AVEDQRKEETENKLEKSSGQLNKQENDIPT), 647–676 (ESLKDLQEVKSKQRKKKKTKNKKNKDSKED), 792–853 (IASL…SKLN), and 904–939 (QLKAAVDSWNAIVADVRNKIAFLRTQYNEQINKVKQ). Polar residues predominate over residues 637-647 (GTSIPSESSTE). The span at 648–657 (SLKDLQEVKS) shows a compositional bias: basic and acidic residues. Residues 658-669 (KQRKKKKTKNKK) show a composition bias toward basic residues. Positions 670–693 (NKDSKEDQVPYVVEKEEQLRKEQA) are enriched in basic and acidic residues. The disordered stretch occupies residues 1088–1145 (KSQSQGKSVSNVNCVSPSHSPSQPDAAQPPKPAWRPLTSQGPATWEGASNPDEEEEEE). Polar residues predominate over residues 1089–1112 (SQSQGKSVSNVNCVSPSHSPSQPD). The RING-type; atypical zinc finger occupies 1148–1188 (CVICHENLSPENLSVLPCAHKFHAQCIRPWLMQQGTCPTCR).

In terms of assembly, interacts with DAZ proteins. In terms of tissue distribution, widely expressed at low level. Highly expressed in skeletal muscle, kidney and heart. Expressed at low level in placenta, lung, brain, liver and pancreas.

The protein resides in the cytoplasm. The catalysed reaction is S-ubiquitinyl-[E2 ubiquitin-conjugating enzyme]-L-cysteine + [acceptor protein]-L-lysine = [E2 ubiquitin-conjugating enzyme]-L-cysteine + N(6)-ubiquitinyl-[acceptor protein]-L-lysine.. It participates in protein modification; protein ubiquitination. Functionally, E3 Ubiquitin ligase proteins mediate ubiquitination and subsequent proteasomal degradation of target proteins. E3 ubiquitin ligases accept ubiquitin from an E2 ubiquitin-conjugating enzyme in the form of a thioester and then directly transfers the ubiquitin to targeted substrates. Able to specifically bind RNA. This Homo sapiens (Human) protein is E3 ubiquitin-protein ligase DZIP3 (DZIP3).